Reading from the N-terminus, the 496-residue chain is Probable cytosol aminopeptidase (496 aa).

Mn(2+)-binding residues include Lys266 and Asp271. Lys278 is a catalytic residue. Mn(2+)-binding residues include Asp290, Asp349, and Glu351. The active site involves Arg353.

Belongs to the peptidase M17 family. Mn(2+) is required as a cofactor.

Its subcellular location is the cytoplasm. It carries out the reaction Release of an N-terminal amino acid, Xaa-|-Yaa-, in which Xaa is preferably Leu, but may be other amino acids including Pro although not Arg or Lys, and Yaa may be Pro. Amino acid amides and methyl esters are also readily hydrolyzed, but rates on arylamides are exceedingly low.. The enzyme catalyses Release of an N-terminal amino acid, preferentially leucine, but not glutamic or aspartic acids.. Its function is as follows. Presumably involved in the processing and regular turnover of intracellular proteins. Catalyzes the removal of unsubstituted N-terminal amino acids from various peptides. This chain is Probable cytosol aminopeptidase, found in Trichodesmium erythraeum (strain IMS101).